Consider the following 622-residue polypeptide: Deoxynucleoside triphosphate triphosphohydrolase SAMHD1 (622 aa).

The region spanning 26 to 89 is the SAM domain; the sequence is WDVEDTVAYL…LHCLQKLSQI (64 aa). GTP contacts are provided by Lys95 and Val96. DGTP is bound at residue Asn98. GTP is bound by residues Asp116, Gln121, and Arg124. The dGTP site is built by Gln128, Leu129, Val135, and Arg143. A dATP-binding site is contributed by Gln128. Gln128 lines the dCTP pocket. Position 128 (Gln128) interacts with dTTP. Arg143 provides a ligand contact to dATP. Residue Arg143 participates in dCTP binding. Arg143 lines the dTTP pocket. One can recognise an HD domain in the interval 143-296; sequence RFEHSIGVGY…GIDVDKWDYF (154 aa). His146, His185, and Asp186 together coordinate Mn(2+). 2 residues coordinate dATP: His189 and His194. Residues His189 and His194 each coordinate dCTP. DTTP-binding residues include His189 and His194. The active site involves His212. Asp291 provides a ligand contact to Mn(2+). Lys292, Tyr295, Asp299, Arg313, Arg332, Lys334, Asn338, Arg346, Tyr354, Gln355, His356, and Lys357 together coordinate dGTP. Residues Lys292, Tyr295, and Asp299 each contribute to the dATP site. DCTP contacts are provided by Lys292, Tyr295, and Asp299. Residues Lys292, Tyr295, and Asp299 each contribute to the dTTP site. Residue Arg346 participates in dATP binding. A dCTP-binding site is contributed by Arg346. Residue Gln355 participates in dATP binding. Residue Gln355 participates in dCTP binding. Gln355 serves as a coordination point for dTTP. Positions 431, 435, and 502 each coordinate GTP. Lys502 serves as a coordination point for dGTP. The interval 571–622 is disordered; sequence TPLKQDWHAREDEDEEEEEKHRQNQTLPHHTPQRTGRNVKVDLFQARGETKL. Over residues 594–606 the composition is skewed to polar residues; sequence NQTLPHHTPQRTG.

Belongs to the SAMHD1 family. As to quaternary structure, homodimer; in absence of GTP and dNTP. Homotetramer; in GTP- and dNTP-bound form. Interacts with rbbp8/CtIP. The cofactor is Zn(2+).

The protein localises to the nucleus. It localises to the chromosome. The catalysed reaction is a 2'-deoxyribonucleoside 5'-triphosphate + H2O = a 2'-deoxyribonucleoside + triphosphate + H(+). It catalyses the reaction dATP + H2O = 2'-deoxyadenosine + triphosphate + H(+). The enzyme catalyses dCTP + H2O = 2'-deoxycytidine + triphosphate + H(+). It carries out the reaction dGTP + H2O = 2'-deoxyguanosine + triphosphate + H(+). The catalysed reaction is dTTP + H2O = thymidine + triphosphate + H(+). Its activity is regulated as follows. Allosterically activated and regulated via the combined actions of GTP and dNTPs (dATP, dGTP, dTTP and dCTP): Allosteric site 1 binds GTP, while allosteric site 2 binds dNTP. Allosteric activation promotes the formation of highly active homotetramers. Functionally, protein that acts both as a host restriction factor involved in defense response to virus and as a regulator of DNA end resection at stalled replication forks. Has deoxynucleoside triphosphate (dNTPase) activity, which is required to restrict infection by viruses: dNTPase activity reduces cellular dNTP levels to levels too low for retroviral reverse transcription to occur, blocking early-stage virus replication in dendritic and other myeloid cells. Functions during S phase at stalled DNA replication forks to promote the resection of gapped or reversed forks: acts by stimulating the exonuclease activity of MRE11, activating the ATR-CHK1 pathway and allowing the forks to restart replication. Its ability to promote degradation of nascent DNA at stalled replication forks is required to prevent induction of type I interferons, thereby preventing chronic inflammation. Ability to promote DNA end resection at stalled replication forks is independent of dNTPase activity. This Danio rerio (Zebrafish) protein is Deoxynucleoside triphosphate triphosphohydrolase SAMHD1.